We begin with the raw amino-acid sequence, 597 residues long: Elongation factor 4 (597 aa).

The 183-residue stretch at 2 to 184 (KHIRNFSIIA…KIVSAIPAPE (183 aa)) folds into the tr-type G domain. Residues 14–19 (DHGKST) and 131–134 (NKID) contribute to the GTP site.

It belongs to the TRAFAC class translation factor GTPase superfamily. Classic translation factor GTPase family. LepA subfamily.

It is found in the cell inner membrane. The catalysed reaction is GTP + H2O = GDP + phosphate + H(+). Its function is as follows. Required for accurate and efficient protein synthesis under certain stress conditions. May act as a fidelity factor of the translation reaction, by catalyzing a one-codon backward translocation of tRNAs on improperly translocated ribosomes. Back-translocation proceeds from a post-translocation (POST) complex to a pre-translocation (PRE) complex, thus giving elongation factor G a second chance to translocate the tRNAs correctly. Binds to ribosomes in a GTP-dependent manner. The polypeptide is Elongation factor 4 (Vibrio vulnificus (strain CMCP6)).